The following is a 570-amino-acid chain: MAGGAREVLTLQLGHFAGFVGAHWWNQQDAALGQATDSKEPLGELCPDVLYRTGRTLHGQETYTPRLILMDLKGSLSSLKEEGGLYRDKQLDAAIAWQGKLTTHKEELYPKNPYLQDFLSAEGVLSSDGVWRVKSIPNGKGSPPLTTATTPKPLIPTEASIRVWSDFLRVHLHPRSICMIQKYNHDGEAGRLEAFGQGESVLKEPKYQEELEDRLHFYVEECDYLQGFQILCDLHDGFSGVGAKAAELLQDEYSGRGIITWGLLPGPYHRGEAQRNIYRLLNTAFGLVHLTAHSSLVCPLSLGGSLGLRPEPPVNFPYLHYDATLPFHCSAILATALDTVTVPYRLCSSPVSMVHLADMLSFCGKKVVTAGAIIPFPLAPGQSLPDSLMQFGGATPWTPLSACGEPSGTRCFAQSVVLRGIDRACHTSQLTPGTPPPSALHACTTGEEVLAQYLQQQQPGVMSSSRLLLTPCRVAPPYPHLFSSCGPPGMVLDGSPKGAAVESIPVFGALCSSSSLHQTLEALARDLTKLDLRRWASFMDAGVEHDDIAELLQELQSLAQCYQDGDSLVD.

S495 is modified (phosphoserine).

It belongs to the misato family.

The protein localises to the mitochondrion outer membrane. The protein resides in the cytoplasm. Involved in the regulation of mitochondrial distribution and morphology. Required for mitochondrial fusion and mitochondrial network formation. The protein is Protein misato homolog 1 (MSTO1) of Pongo pygmaeus (Bornean orangutan).